Reading from the N-terminus, the 421-residue chain is UPF0229 protein lpl2726 (421 aa).

The segment at 83–110 (IAGDRIKRPGGGGSGGAGGNASDSGEGE) is disordered. The span at 91-101 (PGGGGSGGAGG) shows a compositional bias: gly residues.

Belongs to the UPF0229 family.

This is UPF0229 protein lpl2726 from Legionella pneumophila (strain Lens).